We begin with the raw amino-acid sequence, 102 residues long: Small ribosomal subunit protein uS17 (102 aa).

A disordered region spans residues 1 to 27; the sequence is MEQTEEHTDTHTDEQDEAVDRNDRKER.

This sequence belongs to the universal ribosomal protein uS17 family. As to quaternary structure, part of the 30S ribosomal subunit.

One of the primary rRNA binding proteins, it binds specifically to the 5'-end of 16S ribosomal RNA. This Salinibacter ruber (strain DSM 13855 / M31) protein is Small ribosomal subunit protein uS17.